Consider the following 147-residue polypeptide: Large ribosomal subunit protein bL9 (147 aa).

This sequence belongs to the bacterial ribosomal protein bL9 family.

Binds to the 23S rRNA. The sequence is that of Large ribosomal subunit protein bL9 from Clostridium tetani (strain Massachusetts / E88).